A 120-amino-acid chain; its full sequence is A-type ATP synthase subunit F (120 aa).

Belongs to the V-ATPase F subunit family. Has multiple subunits with at least A(3), B(3), C, D, E, F, H, I and proteolipid K(x).

It is found in the cell membrane. In terms of biological role, component of the A-type ATP synthase that produces ATP from ADP in the presence of a proton gradient across the membrane. The sequence is that of A-type ATP synthase subunit F from Halobacterium salinarum (strain ATCC 29341 / DSM 671 / R1).